Here is a 390-residue protein sequence, read N- to C-terminus: Transposase for insertion sequence element IS21 (390 aa).

The HTH IS21-type domain maps to 5 to 66 (EDFYMIKQMR…PFMDYIDMRL (62 aa)). Residues 20 to 39 (IVDIATQIGCSERTVRRYLK) constitute a DNA-binding region (H-T-H motif). An Integrase catalytic domain is found at 111-285 (FETQPRYQLQ…TPEQRFALEQ (175 aa)).

The protein belongs to the transposase IS21/IS408/IS1162 family.

Its function is as follows. Involved in the transposition of the insertion sequence. This Pseudomonas aeruginosa protein is Transposase for insertion sequence element IS21 (istA).